Consider the following 305-residue polypeptide: MGSNVYGILTMVMIAEFVFGNMSNGFIVLINCIDWVRKGTLSSIGWILLFLAISRMVLIWEMLITWIKYMKYSFSFVTGTELRGIMFTWVISNHFSLWLATILSIFYLLKIASFSKPVFLYLKWREKKVLLIVLLGNLIFLMLNILQINKHIEHWMYQYERNITWSSRVSDFAGFSNLVLLEMIVFSVTPFTVALVSFILLIFSLWKHLQKMHLNSRGERDPSTKAHVNALRIMVSFLLLYATYFISFFLSLIPMAHKTRLGLMFSITVGLFYPSSHSFILILGHSNLRQASLWVMTYLKCGQKH.

Residues 1–7 lie on the Extracellular side of the membrane; that stretch reads MGSNVYG. Residues 8–28 traverse the membrane as a helical segment; it reads ILTMVMIAEFVFGNMSNGFIV. Residues 29–43 are Cytoplasmic-facing; the sequence is LINCIDWVRKGTLSS. Residues 44–64 traverse the membrane as a helical segment; the sequence is IGWILLFLAISRMVLIWEMLI. Residues 65 to 88 are Extracellular-facing; the sequence is TWIKYMKYSFSFVTGTELRGIMFT. A helical transmembrane segment spans residues 89–109; the sequence is WVISNHFSLWLATILSIFYLL. Topologically, residues 110–128 are cytoplasmic; that stretch reads KIASFSKPVFLYLKWREKK. Residues 129-149 form a helical membrane-spanning segment; it reads VLLIVLLGNLIFLMLNILQIN. The Extracellular segment spans residues 150-182; that stretch reads KHIEHWMYQYERNITWSSRVSDFAGFSNLVLLE. Asparagine 162 is a glycosylation site (N-linked (GlcNAc...) asparagine). The helical transmembrane segment at 183–203 threads the bilayer; that stretch reads MIVFSVTPFTVALVSFILLIF. Topologically, residues 204 to 232 are cytoplasmic; the sequence is SLWKHLQKMHLNSRGERDPSTKAHVNALR. The helical transmembrane segment at 233 to 253 threads the bilayer; that stretch reads IMVSFLLLYATYFISFFLSLI. The Extracellular portion of the chain corresponds to 254–262; the sequence is PMAHKTRLG. Residues 263-283 traverse the membrane as a helical segment; the sequence is LMFSITVGLFYPSSHSFILIL. The Cytoplasmic portion of the chain corresponds to 284-305; the sequence is GHSNLRQASLWVMTYLKCGQKH.

It belongs to the G-protein coupled receptor T2R family.

It is found in the cell membrane. Functionally, receptor that may play a role in the perception of bitterness and is gustducin-linked. May play a role in sensing the chemical composition of the gastrointestinal content. The activity of this receptor may stimulate alpha gustducin, mediate PLC-beta-2 activation and lead to the gating of TRPM5. The protein is Taste receptor type 2 member 13 of Mus musculus (Mouse).